We begin with the raw amino-acid sequence, 166 residues long: Crossover junction endodeoxyribonuclease RuvC (166 aa).

Catalysis depends on residues aspartate 7, glutamate 70, and histidine 143. Residues aspartate 7, glutamate 70, and histidine 143 each coordinate Mg(2+).

It belongs to the RuvC family. Homodimer which binds Holliday junction (HJ) DNA. The HJ becomes 2-fold symmetrical on binding to RuvC with unstacked arms; it has a different conformation from HJ DNA in complex with RuvA. In the full resolvosome a probable DNA-RuvA(4)-RuvB(12)-RuvC(2) complex forms which resolves the HJ. It depends on Mg(2+) as a cofactor.

It localises to the cytoplasm. The catalysed reaction is Endonucleolytic cleavage at a junction such as a reciprocal single-stranded crossover between two homologous DNA duplexes (Holliday junction).. Functionally, the RuvA-RuvB-RuvC complex processes Holliday junction (HJ) DNA during genetic recombination and DNA repair. Endonuclease that resolves HJ intermediates. Cleaves cruciform DNA by making single-stranded nicks across the HJ at symmetrical positions within the homologous arms, yielding a 5'-phosphate and a 3'-hydroxyl group; requires a central core of homology in the junction. The consensus cleavage sequence is 5'-(A/T)TT(C/G)-3'. Cleavage occurs on the 3'-side of the TT dinucleotide at the point of strand exchange. HJ branch migration catalyzed by RuvA-RuvB allows RuvC to scan DNA until it finds its consensus sequence, where it cleaves and resolves the cruciform DNA. In Thermus thermophilus (strain ATCC BAA-163 / DSM 7039 / HB27), this protein is Crossover junction endodeoxyribonuclease RuvC.